Here is a 353-residue protein sequence, read N- to C-terminus: Photosystem II D2 protein (353 aa).

The residue at position 2 (Thr2) is an N-acetylthreonine. Thr2 is subject to Phosphothreonine. Residues 41–61 (TAYFALGGWFTGTTFVTSWYT) traverse the membrane as a helical segment. A chlorophyll a-binding site is contributed by His118. A helical membrane pass occupies residues 125 to 141 (GFMLRQFELARSVQLRP). Pheophytin a contacts are provided by Gln130 and Asn143. Residues 153–166 (VFVSVFLIYPLGQS) form a helical membrane-spanning segment. His198 serves as a coordination point for chlorophyll a. The chain crosses the membrane as a helical span at residues 208 to 228 (AALLCAIHGATVENTLFEDGD). Residues His215 and Phe262 each coordinate a plastoquinone. Residue His215 coordinates Fe cation. His269 contributes to the Fe cation binding site. The chain crosses the membrane as a helical span at residues 279–295 (GLWMSAIGVVGLALNLR).

This sequence belongs to the reaction center PufL/M/PsbA/D family. As to quaternary structure, PSII is composed of 1 copy each of membrane proteins PsbA, PsbB, PsbC, PsbD, PsbE, PsbF, PsbH, PsbI, PsbJ, PsbK, PsbL, PsbM, PsbT, PsbX, PsbY, PsbZ, Psb30/Ycf12, at least 3 peripheral proteins of the oxygen-evolving complex and a large number of cofactors. It forms dimeric complexes. It depends on The D1/D2 heterodimer binds P680, chlorophylls that are the primary electron donor of PSII, and subsequent electron acceptors. It shares a non-heme iron and each subunit binds pheophytin, quinone, additional chlorophylls, carotenoids and lipids. There is also a Cl(-1) ion associated with D1 and D2, which is required for oxygen evolution. The PSII complex binds additional chlorophylls, carotenoids and specific lipids. as a cofactor.

Its subcellular location is the plastid. It localises to the chloroplast thylakoid membrane. It catalyses the reaction 2 a plastoquinone + 4 hnu + 2 H2O = 2 a plastoquinol + O2. Photosystem II (PSII) is a light-driven water:plastoquinone oxidoreductase that uses light energy to abstract electrons from H(2)O, generating O(2) and a proton gradient subsequently used for ATP formation. It consists of a core antenna complex that captures photons, and an electron transfer chain that converts photonic excitation into a charge separation. The D1/D2 (PsbA/PsbD) reaction center heterodimer binds P680, the primary electron donor of PSII as well as several subsequent electron acceptors. D2 is needed for assembly of a stable PSII complex. This chain is Photosystem II D2 protein, found in Adiantum capillus-veneris (Maidenhair fern).